We begin with the raw amino-acid sequence, 264 residues long: Proteasome subunit beta type-4 (264 aa).

M1 is modified (N-acetylmethionine). A propeptide spanning residues 1–45 is cleaved from the precursor; the sequence is MEALLESRSGLWAGGPAPGQFYRIPPTPGSSVDPVSALYGSPITR. Y102 is modified (phosphotyrosine).

It belongs to the peptidase T1B family. The 26S proteasome consists of a 20S proteasome core and two 19S regulatory subunits. The 20S proteasome core is a barrel-shaped complex made of 28 subunits that are arranged in four stacked rings. The two outer rings are each formed by seven alpha subunits, and the two inner rings are formed by seven beta subunits. The proteolytic activity is exerted by three beta-subunits PSMB5, PSMB6 and PSMB7. Forms a ternary complex with SMAD1 and OAZ1 before PSMB4 is incorporated into the 20S proteasome. Interacts with PRPF19.

It is found in the cytoplasm. The protein resides in the nucleus. Functionally, non-catalytic component of the 20S core proteasome complex involved in the proteolytic degradation of most intracellular proteins. This complex plays numerous essential roles within the cell by associating with different regulatory particles. Associated with two 19S regulatory particles, forms the 26S proteasome and thus participates in the ATP-dependent degradation of ubiquitinated proteins. The 26S proteasome plays a key role in the maintenance of protein homeostasis by removing misfolded or damaged proteins that could impair cellular functions, and by removing proteins whose functions are no longer required. Associated with the PA200 or PA28, the 20S proteasome mediates ubiquitin-independent protein degradation. This type of proteolysis is required in several pathways including spermatogenesis (20S-PA200 complex) or generation of a subset of MHC class I-presented antigenic peptides (20S-PA28 complex). SMAD1/OAZ1/PSMB4 complex mediates the degradation of the CREBBP/EP300 repressor SNIP1. In Bos taurus (Bovine), this protein is Proteasome subunit beta type-4 (PSMB4).